Reading from the N-terminus, the 607-residue chain is Protein P1 (607 aa).

The first 22 residues, 1-22 (MYSKLMFFFALCSISFLFTSEA), serve as a signal peptide directing secretion. 3 consecutive transmembrane segments (helical) span residues 115–135 (FLAVEKFLWGLTRLWSSLILA), 137–157 (FSALWWLVSNFTTPVFCLALL), and 167–187 (TVSFLFGGLPIWIISIAFSLL). Positions 206 to 400 (IDGFKSFTIP…GLTSPTYVFE (195 aa)) constitute a Peptidase S39 domain. Residues His-254, Asp-289, and Ser-357 each act as for protease activity in the active site. 2 disordered regions span residues 457–485 (EDLSGNGVRGTVRGTNGEGSSTPKTSNVD) and 517–607 (KAMK…PKQN). Polar residues predominate over residues 474–484 (EGSSTPKTSNV). Basic residues predominate over residues 520 to 531 (KTPKSRRRRAPK). The span at 532–541 (KQPESSKDTS) shows a compositional bias: basic and acidic residues. Positions 558–571 (ASVTAANCPNTTTP) are enriched in polar residues.

This sequence belongs to the peptidase S39B family. Post-translationally, specific enzymatic cleavages in vivo yield mature proteins. The protease probably cleaves itself and releases the VPg protein.

It localises to the membrane. Precursor from which the VPg molecule is probably released at the onset of the RNA synthesis. Essential for virus replication. The chain is Protein P1 from Turnip yellows virus (isolate FL-1) (TuYV).